The primary structure comprises 184 residues: Photosystem I assembly protein Ycf4 (184 aa).

The next 2 membrane-spanning stretches (helical) occupy residues 22–42 (LCWA…GTSS) and 57–77 (ILFF…LFIS).

It belongs to the Ycf4 family.

The protein localises to the plastid. Its subcellular location is the chloroplast thylakoid membrane. Its function is as follows. Seems to be required for the assembly of the photosystem I complex. The sequence is that of Photosystem I assembly protein Ycf4 from Daucus carota (Wild carrot).